A 396-amino-acid chain; its full sequence is Subtelomeric hrmA-associated cluster protein AFUB_079040 (396 aa).

Disordered stretches follow at residues Met-1 to Leu-32 and Tyr-347 to Arg-396. Over residues Ser-23 to Leu-32 the composition is skewed to polar residues. Residues Ser-367–Lys-380 show a composition bias toward basic residues.

Functionally, part of the subtelomeric hrmA-associated cluster (HAC) containing genes that alter the hyphal surface (such as reduced total chitin or increased beta-glucan exposure) and perturb inter-hyphal interactions within the developing biofilms, resulting in a loss of vertically aligned polarized growing filaments. Consequently, this hypoxia-typic morphotype (called H-MORPH) with altered biofilm architecture leads to increased hypoxia fitness, increased host inflammation, rapid disease progression, and mortality in a murine model of invasive aspergillosis. This Aspergillus fumigatus (strain CBS 144.89 / FGSC A1163 / CEA10) (Neosartorya fumigata) protein is Subtelomeric hrmA-associated cluster protein AFUB_079040.